The primary structure comprises 102 residues: Large ribosomal subunit protein uL24 (102 aa).

Residues 1 to 22 (MHVKKGDTVQVMSGKDKGKQGV) form a disordered region.

This sequence belongs to the universal ribosomal protein uL24 family. In terms of assembly, part of the 50S ribosomal subunit.

In terms of biological role, one of two assembly initiator proteins, it binds directly to the 5'-end of the 23S rRNA, where it nucleates assembly of the 50S subunit. Its function is as follows. One of the proteins that surrounds the polypeptide exit tunnel on the outside of the subunit. The sequence is that of Large ribosomal subunit protein uL24 from Exiguobacterium sp. (strain ATCC BAA-1283 / AT1b).